We begin with the raw amino-acid sequence, 373 residues long: Flagellar P-ring protein (373 aa).

A signal peptide spans 1 to 30 (MTNRWSFDVKKNLVTLILTWLCLSISTAQA).

It belongs to the FlgI family. As to quaternary structure, the basal body constitutes a major portion of the flagellar organelle and consists of four rings (L,P,S, and M) mounted on a central rod.

The protein localises to the periplasm. It is found in the bacterial flagellum basal body. Functionally, assembles around the rod to form the L-ring and probably protects the motor/basal body from shearing forces during rotation. The polypeptide is Flagellar P-ring protein (Aliivibrio salmonicida (strain LFI1238) (Vibrio salmonicida (strain LFI1238))).